A 156-amino-acid polypeptide reads, in one-letter code: MSMVVYNNQGGEEGNPFAGALTEFSQWLWSRPLGNPGAEDVEEEAIAAQEELEFPEDEAQARHSCLQRTTSWATPKEVSPSGRVYQTVRLSRMEYSRPTMSIRSQASYFSSSARPLPPPPAPSLMSWTPIAKYHPSSPTSTSSKLRRAAPKLIKRG.

The interval 38-54 (AEDVEEEAIAAQEELEF) is homodimerization. The tract at residues 57 to 156 (DEAQARHSCL…RAAPKLIKRG (100 aa)) is RNA-binding. Phosphoserine occurs at positions 71, 79, 137, and 140. The interval 106-156 (ASYFSSSARPLPPPPAPSLMSWTPIAKYHPSSPTSTSSKLRRAAPKLIKRG) is disordered. Basic residues predominate over residues 144–156 (KLRRAAPKLIKRG).

Belongs to the polerovirus movement protein family. As to quaternary structure, homodimer. Post-translationally, expressed as a nonphosphorylated 20kDa form and a phosphorylated 22kDa form. Phosphorylated by a host PKC-related kinase. Serine phosphorylation is required for plamodesma targeting.

It is found in the host cell junction. It localises to the host plasmodesma. The protein localises to the host chloroplast envelope. Its subcellular location is the host Golgi apparatus. The protein resides in the host mitochondrion outer membrane. Together with movement protein P3a, facilitates long-distance movement of virions in host. Transports viral genome to neighboring plant cells directly through plasmosdesmata, without any budding. The movement protein allows efficient cell to cell propagation, by bypassing the host cell wall barrier. Binds ssRNA. This is Movement protein P17 from Solanum tuberosum (Potato).